The following is a 258-amino-acid chain: Acetylglutamate kinase (258 aa).

Substrate-binding positions include 41–42 (GG), Arg-63, and Asn-156.

It belongs to the acetylglutamate kinase family. ArgB subfamily.

It localises to the cytoplasm. It carries out the reaction N-acetyl-L-glutamate + ATP = N-acetyl-L-glutamyl 5-phosphate + ADP. Its pathway is amino-acid biosynthesis; L-arginine biosynthesis; N(2)-acetyl-L-ornithine from L-glutamate: step 2/4. Its function is as follows. Catalyzes the ATP-dependent phosphorylation of N-acetyl-L-glutamate. This Geobacillus kaustophilus (strain HTA426) protein is Acetylglutamate kinase.